The primary structure comprises 445 residues: Proline--tRNA ligase (445 aa).

The protein belongs to the class-II aminoacyl-tRNA synthetase family. ProS type 2 subfamily. Homodimer.

It is found in the cytoplasm. It catalyses the reaction tRNA(Pro) + L-proline + ATP = L-prolyl-tRNA(Pro) + AMP + diphosphate. Its function is as follows. Catalyzes the attachment of proline to tRNA(Pro) in a two-step reaction: proline is first activated by ATP to form Pro-AMP and then transferred to the acceptor end of tRNA(Pro). This Cereibacter sphaeroides (strain ATCC 17023 / DSM 158 / JCM 6121 / CCUG 31486 / LMG 2827 / NBRC 12203 / NCIMB 8253 / ATH 2.4.1.) (Rhodobacter sphaeroides) protein is Proline--tRNA ligase.